We begin with the raw amino-acid sequence, 83 residues long: Toxin AahP985 (83 aa).

The N-terminal stretch at 1–18 is a signal peptide; sequence MNYLVMISLALLIAGVDS. Residues 20–82 form the LCN-type CS-alpha/beta domain; sequence RDAYIAKNDN…VPIKLSGECH (63 aa). 4 disulfides stabilise this stretch: C30/C81, C34/C54, C40/C64, and C44/C66.

The protein belongs to the long (4 C-C) scorpion toxin superfamily. Sodium channel inhibitor family. Alpha subfamily. As to expression, expressed by the venom gland.

The protein localises to the secreted. Functionally, binds voltage-independently at site-3 of sodium channels (Nav) and inhibits the inactivation of the activated channels, thereby blocking neuronal transmission. The chain is Toxin AahP985 from Androctonus australis (Sahara scorpion).